Reading from the N-terminus, the 478-residue chain is Aspartyl/glutamyl-tRNA(Asn/Gln) amidotransferase subunit B (478 aa).

It belongs to the GatB/GatE family. GatB subfamily. In terms of assembly, heterotrimer of A, B and C subunits.

It carries out the reaction L-glutamyl-tRNA(Gln) + L-glutamine + ATP + H2O = L-glutaminyl-tRNA(Gln) + L-glutamate + ADP + phosphate + H(+). The catalysed reaction is L-aspartyl-tRNA(Asn) + L-glutamine + ATP + H2O = L-asparaginyl-tRNA(Asn) + L-glutamate + ADP + phosphate + 2 H(+). Its function is as follows. Allows the formation of correctly charged Asn-tRNA(Asn) or Gln-tRNA(Gln) through the transamidation of misacylated Asp-tRNA(Asn) or Glu-tRNA(Gln) in organisms which lack either or both of asparaginyl-tRNA or glutaminyl-tRNA synthetases. The reaction takes place in the presence of glutamine and ATP through an activated phospho-Asp-tRNA(Asn) or phospho-Glu-tRNA(Gln). The chain is Aspartyl/glutamyl-tRNA(Asn/Gln) amidotransferase subunit B from Dichelobacter nodosus (strain VCS1703A).